Here is a 219-residue protein sequence, read N- to C-terminus: Ribosomal RNA small subunit methyltransferase G (219 aa).

Residues glycine 78, phenylalanine 83, glycine 129–glutamate 130, and arginine 146 contribute to the S-adenosyl-L-methionine site.

The protein belongs to the methyltransferase superfamily. RNA methyltransferase RsmG family.

It is found in the cytoplasm. It catalyses the reaction guanosine(527) in 16S rRNA + S-adenosyl-L-methionine = N(7)-methylguanosine(527) in 16S rRNA + S-adenosyl-L-homocysteine. Its function is as follows. Specifically methylates the N7 position of guanine in position 527 of 16S rRNA. This chain is Ribosomal RNA small subunit methyltransferase G, found in Geotalea uraniireducens (strain Rf4) (Geobacter uraniireducens).